Here is a 310-residue protein sequence, read N- to C-terminus: Aspartate carbamoyltransferase catalytic subunit (310 aa).

Carbamoyl phosphate is bound by residues arginine 58 and threonine 59. Lysine 86 is a binding site for L-aspartate. Carbamoyl phosphate-binding residues include arginine 108, histidine 136, and glutamine 139. Residues arginine 169 and arginine 224 each contribute to the L-aspartate site. 2 residues coordinate carbamoyl phosphate: glycine 265 and proline 266.

It belongs to the aspartate/ornithine carbamoyltransferase superfamily. ATCase family. In terms of assembly, heterododecamer (2C3:3R2) of six catalytic PyrB chains organized as two trimers (C3), and six regulatory PyrI chains organized as three dimers (R2).

It catalyses the reaction carbamoyl phosphate + L-aspartate = N-carbamoyl-L-aspartate + phosphate + H(+). It participates in pyrimidine metabolism; UMP biosynthesis via de novo pathway; (S)-dihydroorotate from bicarbonate: step 2/3. Functionally, catalyzes the condensation of carbamoyl phosphate and aspartate to form carbamoyl aspartate and inorganic phosphate, the committed step in the de novo pyrimidine nucleotide biosynthesis pathway. The polypeptide is Aspartate carbamoyltransferase catalytic subunit (Citrifermentans bemidjiense (strain ATCC BAA-1014 / DSM 16622 / JCM 12645 / Bem) (Geobacter bemidjiensis)).